A 98-amino-acid chain; its full sequence is Large ribosomal subunit protein uL23 (98 aa).

It belongs to the universal ribosomal protein uL23 family. In terms of assembly, part of the 50S ribosomal subunit. Contacts protein L29, and trigger factor when it is bound to the ribosome.

In terms of biological role, one of the early assembly proteins it binds 23S rRNA. One of the proteins that surrounds the polypeptide exit tunnel on the outside of the ribosome. Forms the main docking site for trigger factor binding to the ribosome. The polypeptide is Large ribosomal subunit protein uL23 (Lactobacillus johnsonii (strain CNCM I-12250 / La1 / NCC 533)).